Here is a 475-residue protein sequence, read N- to C-terminus: tRNA-2-methylthio-N(6)-dimethylallyladenosine synthase (475 aa).

One can recognise an MTTase N-terminal domain in the interval 2-119 (AKLHITTWGC…LPEMINKIRG (118 aa)). Residues Cys-11, Cys-48, Cys-82, Cys-156, Cys-160, and Cys-163 each contribute to the [4Fe-4S] cluster site. Positions 142-374 (RAEGPTAFVS…QQRINHQAMQ (233 aa)) constitute a Radical SAM core domain. The region spanning 377 to 440 (RAMLGTEQRV…TNSLRGEVVR (64 aa)) is the TRAM domain.

This sequence belongs to the methylthiotransferase family. MiaB subfamily. As to quaternary structure, monomer. [4Fe-4S] cluster serves as cofactor.

Its subcellular location is the cytoplasm. It carries out the reaction N(6)-dimethylallyladenosine(37) in tRNA + (sulfur carrier)-SH + AH2 + 2 S-adenosyl-L-methionine = 2-methylsulfanyl-N(6)-dimethylallyladenosine(37) in tRNA + (sulfur carrier)-H + 5'-deoxyadenosine + L-methionine + A + S-adenosyl-L-homocysteine + 2 H(+). Its function is as follows. Catalyzes the methylthiolation of N6-(dimethylallyl)adenosine (i(6)A), leading to the formation of 2-methylthio-N6-(dimethylallyl)adenosine (ms(2)i(6)A) at position 37 in tRNAs that read codons beginning with uridine. The sequence is that of tRNA-2-methylthio-N(6)-dimethylallyladenosine synthase from Actinobacillus pleuropneumoniae serotype 3 (strain JL03).